The chain runs to 785 residues: Hypha-specific G1 cyclin-related protein 1 (785 aa).

The segment at 1–42 (MINITKPLTPKSISQQKQQQQHPYKNISTTKSNNNPQASGSK) is disordered. The segment covering 22-42 (HPYKNISTTKSNNNPQASGSK) has biased composition (polar residues). A Cyclin N-terminal domain is found at 71–238 (DIYDIMVNLI…VLNTLEWSLN (168 aa)). Disordered stretches follow at residues 408 to 433 (TTTTTTTTSDNISTTPTSSTGSTTPV), 447 to 679 (VSST…SKFN), and 750 to 774 (NNSGNGKGNGNGGSGTPISENDSPI). Composition is skewed to low complexity over residues 447-473 (VSSTSSVASSSNANTPSSSCSTTSTTP) and 484-512 (NYSNYSNYSNYSNSSTSLGLTNNNNNNTT). Polar residues predominate over residues 513-535 (ISPVDSTTINSHTKNSSQLNYQY). Residues 579 to 613 (NSANKNSNKSNSANNNNTTTIATTTTTTTNNNNNS) are compositionally biased toward low complexity. The span at 621-631 (LSYNNYFNSPN) shows a compositional bias: polar residues. Residues 646–679 (QQQQQNQGQNQQQPLQLYQGDNNNNGTNTNSKFN) show a composition bias toward low complexity. The segment covering 754 to 764 (NGKGNGNGGSG) has biased composition (gly residues). Positions 765–774 (TPISENDSPI) are enriched in polar residues.

This sequence belongs to the cyclin family. As to quaternary structure, interacts with CDC28.

In terms of biological role, hypha-specific G1 cyclin-related protein involved in regulation of morphogenesis and opaque cells filamentous growth, and required for both conventional and pheromone-stimulated biofilm formation. Required to maintain hyphal tip localization of actin and SPA2. Regulates the CDC28 kinase during hyphal growth. The CDC28-HGC1 complex phosphorylates and prevents RGA2 from localizing to hyphal tips, leading to localized CDC42 activation for hyphal extension. The CDC28-HGC1 complex also phosphorylates SEC2 and maintains CDC11 phosphorylation throughout hyphal growth. Moreover CDC28-HGC1 phosphorylation of EFG1 represses cell separation genes during hyphal growth. Also partially controls SEP7 phosphorylation status and subsequent septin ring dynamics. Required for virulence and especially mediates dynamic adhesion to endothelium of blood vessels during circulation. The polypeptide is Hypha-specific G1 cyclin-related protein 1 (HGC1) (Candida albicans (strain SC5314 / ATCC MYA-2876) (Yeast)).